Consider the following 163-residue polypeptide: Capsid protein (163 aa).

An N-acetylalanine; by host modification is found at Ala2.

The protein belongs to the virgaviridae capsid protein family.

The protein resides in the virion. Functionally, capsid protein self-assembles to form rod-shaped virions about 18 nm in diameter with a central canal enclosing the viral genomic RNA. The polypeptide is Capsid protein (CP) (Sunn-hemp mosaic virus (SHMV)).